A 113-amino-acid chain; its full sequence is Putative pterin-4-alpha-carbinolamine dehydratase (113 aa).

It belongs to the pterin-4-alpha-carbinolamine dehydratase family.

The catalysed reaction is (4aS,6R)-4a-hydroxy-L-erythro-5,6,7,8-tetrahydrobiopterin = (6R)-L-erythro-6,7-dihydrobiopterin + H2O. This is Putative pterin-4-alpha-carbinolamine dehydratase from Saccharophagus degradans (strain 2-40 / ATCC 43961 / DSM 17024).